A 175-amino-acid chain; its full sequence is Peptide deformylase (175 aa).

Residues Cys92 and His134 each coordinate Fe cation. Residue Glu135 is part of the active site. His138 is a Fe cation binding site.

Belongs to the polypeptide deformylase family. Fe(2+) serves as cofactor.

The enzyme catalyses N-terminal N-formyl-L-methionyl-[peptide] + H2O = N-terminal L-methionyl-[peptide] + formate. Its function is as follows. Removes the formyl group from the N-terminal Met of newly synthesized proteins. Requires at least a dipeptide for an efficient rate of reaction. N-terminal L-methionine is a prerequisite for activity but the enzyme has broad specificity at other positions. This Blochmanniella floridana protein is Peptide deformylase.